Reading from the N-terminus, the 463-residue chain is Lactadherin (463 aa).

Positions 1–22 are cleaved as a signal peptide; sequence MQVSRVLAALCGMLLCASGLFA. 2 consecutive EGF-like domains span residues 24 to 61 and 64 to 108; these read SGDF…LVCN and ERGP…IHCE. Cystine bridges form between cysteine 28–cysteine 39, cysteine 33–cysteine 49, and cysteine 51–cysteine 60. Asparagine 61 carries N-linked (GlcNAc...) asparagine glycosylation. 6 disulfides stabilise this stretch: cysteine 68–cysteine 79, cysteine 73–cysteine 96, cysteine 98–cysteine 107, cysteine 148–cysteine 303, cysteine 290–cysteine 294, and cysteine 308–cysteine 463. Residues 87–89 carry the Cell attachment site motif; it reads RGD. 2 consecutive F5/8 type C domains span residues 148 to 303 and 308 to 463; these read CSTQ…LLGC and CSEP…LLGC. An N-linked (GlcNAc...) asparagine glycan is attached at asparagine 266. N-linked (GlcNAc...) asparagine glycans are attached at residues asparagine 316 and asparagine 426.

In terms of processing, N-glycosylated. Isoform 1 also exists in both an O-glycosylated and a non-O-glycosylated form. As to expression, mammary epithelial cell surfaces and spermatozoan. Isoform 2 is present in brain, heart, kidney and spleen and at low levels in lung, liver, small intestine and testis.

It is found in the membrane. It localises to the secreted. The protein resides in the cytoplasmic vesicle. The protein localises to the secretory vesicle. Its subcellular location is the acrosome membrane. Contributes to phagocytic removal of apoptotic cells in many tissues. Specific ligand for the alpha-v/beta-3 and alpha-v/beta-5 receptors. Also binds to phosphatidylserine-enriched cell surfaces in a receptor-independent manner. Zona pellucida-binding protein which may play a role in gamete interaction. Plays an important role in the maintenance of intestinal epithelial homeostasis and the promotion of mucosal healing. Promotes VEGF-dependent neovascularization. This chain is Lactadherin (Mfge8), found in Mus musculus (Mouse).